The following is a 471-amino-acid chain: Ribulose bisphosphate carboxylase large chain (471 aa).

Position 5 is an N6,N6,N6-trimethyllysine (lysine 5). 2 residues coordinate substrate: asparagine 114 and threonine 164. The active-site Proton acceptor is the lysine 166. Lysine 168 provides a ligand contact to substrate. Mg(2+)-binding residues include lysine 192, aspartate 194, and glutamate 195. An N6-carboxylysine modification is found at lysine 192. Histidine 285 (proton acceptor) is an active-site residue. 3 residues coordinate substrate: arginine 286, histidine 318, and serine 370.

The protein belongs to the RuBisCO large chain family. Type I subfamily. Heterohexadecamer of 8 large chains and 8 small chains; disulfide-linked. The disulfide link is formed within the large subunit homodimers. It depends on Mg(2+) as a cofactor. In terms of processing, the disulfide bond which can form in the large chain dimeric partners within the hexadecamer appears to be associated with oxidative stress and protein turnover.

It localises to the plastid. The protein resides in the chloroplast. The enzyme catalyses 2 (2R)-3-phosphoglycerate + 2 H(+) = D-ribulose 1,5-bisphosphate + CO2 + H2O. It catalyses the reaction D-ribulose 1,5-bisphosphate + O2 = 2-phosphoglycolate + (2R)-3-phosphoglycerate + 2 H(+). In terms of biological role, ruBisCO catalyzes two reactions: the carboxylation of D-ribulose 1,5-bisphosphate, the primary event in carbon dioxide fixation, as well as the oxidative fragmentation of the pentose substrate in the photorespiration process. Both reactions occur simultaneously and in competition at the same active site. The chain is Ribulose bisphosphate carboxylase large chain from Strychnos nux-vomica (Poison nut).